The following is a 347-amino-acid chain: MAAASRPSWWQRWRRRAWARDGAKLLLFLLLLGSGPGPRHVRAGQAVEYLKREHSLSKPYQGVGTSSSSLWNLMGNAMVMTQYIRLTPDMQSKQGALWNRVPCFLKDWELQVHFKIHGQGKKNLHGDGLAIWYTKDRMQPGPVFGNMDKFVGLGVFVDTYPNEEKQHERVFPYISAMVNNGSLSYDHERDGRPTELGGCTAIVRNIRYDTFLVIRYVKRHLTIMMDIDGKHEWRDCIEMPGVRLPRGYYFGTSSITGDLSDNHDVISLKLFELTGVRTPEEEKLHRDVFLPSVDNLKLPEMTVPPTPLSGLALFLIVFFSLVFSVFAIVIGIILYNKWQDQSRKRFY.

An N-terminal signal peptide occupies residues 1–43 (MAAASRPSWWQRWRRRAWARDGAKLLLFLLLLGSGPGPRHVRA). The Lumenal segment spans residues 44–312 (GQAVEYLKRE…VPPTPLSGLA (269 aa)). The region spanning 48–273 (EYLKREHSLS…DVISLKLFEL (226 aa)) is the L-type lectin-like domain. Residues S92 and D127 each contribute to the a carbohydrate site. Residues D158, Y160, and N162 each coordinate Ca(2+). 160-162 (YPN) serves as a coordination point for a carbohydrate. N180 carries an N-linked (GlcNAc...) asparagine glycan. H187 contacts a carbohydrate. D190 contacts Ca(2+). Residues C199 and C236 are joined by a disulfide bond. 257 to 259 (GDL) contributes to the a carbohydrate binding site. A helical transmembrane segment spans residues 313 to 335 (LFLIVFFSLVFSVFAIVIGIILY). Topologically, residues 336–347 (NKWQDQSRKRFY) are cytoplasmic. The Endoplasmic reticulum retention signal signature appears at 343–345 (RKR).

It is found in the endoplasmic reticulum membrane. The protein localises to the golgi apparatus membrane. In terms of biological role, may be involved in the regulation of export from the endoplasmic reticulum of a subset of glycoproteins. May function as a regulator of ERGIC-53. The polypeptide is VIP36-like protein (Lman2l) (Mus musculus (Mouse)).